Reading from the N-terminus, the 406-residue chain is MQHNSLIARFARGNLVIQILVGIILGISLALVSPSSAESVGMLGSLFVGALKAIAPILVFILVAASIANQKKNQHTHMRPIIVMYLAGTFFAALTAVVLSFMFPTTLTLVTGAEGANPPQGIMEVIKTLLFKLVDNPVNALMSANYIGILAWGVGLGLALHHASDTTKAVFEDLSHSVSHIVRFIIRLAPFGIFGLVASTFATTGFDALAGYAHLLVVLLSAMAIIALIVNPAMVYVKTKQNPYPLVFQCLRESGVTAFFTRSSAANIPVNMALCEKLKLDEDTYSVSIPLGATINMAGAAITITTLTLAAVHTMGIEVDLMTALLLSVVAAVSACGASGVAGGSLLLIPLACGLFGISNDIAMQVVAVGFIIGVIQDSAETALNSSTDVVFTAAVCESEAQKAKG.

Transmembrane regions (helical) follow at residues Leu15 to Ser35, Phe47 to Ile67, Ile81 to Phe101, Ala140 to Leu160, Phe191 to Gly211, Leu215 to Val235, Ile289 to Leu309, Met315 to Ala335, and Ile362 to Thr382.

It belongs to the dicarboxylate/amino acid:cation symporter (DAACS) (TC 2.A.23) family.

The protein localises to the cell inner membrane. It carries out the reaction L-serine(in) + Na(+)(in) = L-serine(out) + Na(+)(out). The catalysed reaction is L-threonine(in) + Na(+)(in) = L-threonine(out) + Na(+)(out). In terms of biological role, involved in the import of serine and threonine into the cell, with the concomitant import of sodium (symport system). This chain is Serine/threonine transporter SstT, found in Vibrio vulnificus (strain YJ016).